A 281-amino-acid chain; its full sequence is uncharacterized protein (281 aa).

This is an uncharacterized protein from Haloarcula marismortui (strain ATCC 43049 / DSM 3752 / JCM 8966 / VKM B-1809) (Halobacterium marismortui).